The following is a 395-amino-acid chain: Acetate kinase (395 aa).

Position 8 (Asn-8) interacts with Mg(2+). Lys-15 serves as a coordination point for ATP. Arg-89 is a binding site for substrate. Asp-146 (proton donor/acceptor) is an active-site residue. Residues 206–210, 281–283, and 329–333 contribute to the ATP site; these read HLGNG, DLR, and GIGEN. A Mg(2+)-binding site is contributed by Glu-382.

The protein belongs to the acetokinase family. As to quaternary structure, homodimer. The cofactor is Mg(2+). Requires Mn(2+) as cofactor.

It is found in the cytoplasm. It catalyses the reaction acetate + ATP = acetyl phosphate + ADP. It functions in the pathway metabolic intermediate biosynthesis; acetyl-CoA biosynthesis; acetyl-CoA from acetate: step 1/2. Induced by glucose excess, the induction may be mediated by CcpA transcriptional regulator. In terms of biological role, catalyzes the formation of acetyl phosphate from acetate and ATP. Can also catalyze the reverse reaction. Appears to favor the formation of acetate. Involved in the secretion of excess carbohydrate. The protein is Acetate kinase of Bacillus subtilis (strain 168).